A 513-amino-acid chain; its full sequence is ATP synthase subunit alpha (513 aa).

Residue 169 to 176 coordinates ATP; the sequence is GDRQTGKT.

The protein belongs to the ATPase alpha/beta chains family. In terms of assembly, F-type ATPases have 2 components, CF(1) - the catalytic core - and CF(0) - the membrane proton channel. CF(1) has five subunits: alpha(3), beta(3), gamma(1), delta(1), epsilon(1). CF(0) has three main subunits: a(1), b(2) and c(9-12). The alpha and beta chains form an alternating ring which encloses part of the gamma chain. CF(1) is attached to CF(0) by a central stalk formed by the gamma and epsilon chains, while a peripheral stalk is formed by the delta and b chains.

The protein localises to the cell inner membrane. It carries out the reaction ATP + H2O + 4 H(+)(in) = ADP + phosphate + 5 H(+)(out). Functionally, produces ATP from ADP in the presence of a proton gradient across the membrane. The alpha chain is a regulatory subunit. The sequence is that of ATP synthase subunit alpha from Halorhodospira halophila (strain DSM 244 / SL1) (Ectothiorhodospira halophila (strain DSM 244 / SL1)).